A 367-amino-acid polypeptide reads, in one-letter code: MSLADSVLAINNDLPIRTDSPVHSGKVRSVYWLTDADSRRLITTKGYNVPEDTPLAIMVISDRISAFDCIFHGEGGLKGIPGKGAALNAISNHWFKLFAENGLADSHILDIPHPFVWIVQKARPIKVEAICRQYITGSMWRAYSKGERVFCGITLPEGLEKAQKLPELLITPSTKGILTGIPGVPAQDDVNISRSDIEANYQAFGFEKLSDIDLYEKLLKDGFKVISKALADIDQVFVDTKFEFGYVTDKDGNSKLIYMDEVGTPDSSRIWDGAAYRDGKILENSKEGFRQFLLNHFPDPDVLLNKDRMPEREALARDNDLPLEAMMQVSRTYTGVAEKVTGAPIPLPANPKADIIKILKDEYDLIV.

Belongs to the SAICAR synthetase family.

The catalysed reaction is 5-amino-1-(5-phospho-D-ribosyl)imidazole-4-carboxylate + L-aspartate + ATP = (2S)-2-[5-amino-1-(5-phospho-beta-D-ribosyl)imidazole-4-carboxamido]succinate + ADP + phosphate + 2 H(+). It participates in purine metabolism; IMP biosynthesis via de novo pathway; 5-amino-1-(5-phospho-D-ribosyl)imidazole-4-carboxamide from 5-amino-1-(5-phospho-D-ribosyl)imidazole-4-carboxylate: step 1/2. The sequence is that of Phosphoribosylaminoimidazole-succinocarboxamide synthase from Shewanella baltica (strain OS155 / ATCC BAA-1091).